Consider the following 358-residue polypeptide: tRNA-specific 2-thiouridylase MnmA (358 aa).

ATP contacts are provided by residues 6 to 13 and Leu32; that span reads AMSGGVDS. The active-site Nucleophile is the Cys101. Residues Cys101 and Cys193 are joined by a disulfide bond. An ATP-binding site is contributed by Gly125. The interaction with tRNA stretch occupies residues 143-145; that stretch reads KDQ. Cys193 (cysteine persulfide intermediate) is an active-site residue.

The protein belongs to the MnmA/TRMU family.

The protein localises to the cytoplasm. The catalysed reaction is S-sulfanyl-L-cysteinyl-[protein] + uridine(34) in tRNA + AH2 + ATP = 2-thiouridine(34) in tRNA + L-cysteinyl-[protein] + A + AMP + diphosphate + H(+). Catalyzes the 2-thiolation of uridine at the wobble position (U34) of tRNA, leading to the formation of s(2)U34. The protein is tRNA-specific 2-thiouridylase MnmA of Mycobacterium avium (strain 104).